The following is a 308-amino-acid chain: HPr kinase/phosphorylase (308 aa).

Catalysis depends on residues histidine 138 and lysine 159. Residue 153-160 participates in ATP binding; the sequence is GESGLGKS. Residue serine 160 participates in Mg(2+) binding. The active-site Proton acceptor; for phosphorylation activity. Proton donor; for dephosphorylation activity is aspartate 177. The important for the catalytic mechanism of both phosphorylation and dephosphorylation stretch occupies residues 201–210; the sequence is LEVRGLGLLD. Glutamate 202 serves as a coordination point for Mg(2+). The active site involves arginine 243. Residues 264-269 form an important for the catalytic mechanism of dephosphorylation region; that stretch reads QVAAGR.

The protein belongs to the HPrK/P family. As to quaternary structure, homohexamer. Mg(2+) is required as a cofactor.

It catalyses the reaction [HPr protein]-L-serine + ATP = [HPr protein]-O-phospho-L-serine + ADP + H(+). The enzyme catalyses [HPr protein]-O-phospho-L-serine + phosphate + H(+) = [HPr protein]-L-serine + diphosphate. Functionally, catalyzes the ATP- as well as the pyrophosphate-dependent phosphorylation of a specific serine residue in HPr, a phosphocarrier protein of the phosphoenolpyruvate-dependent sugar phosphotransferase system (PTS). HprK/P also catalyzes the pyrophosphate-producing, inorganic phosphate-dependent dephosphorylation (phosphorolysis) of seryl-phosphorylated HPr (P-Ser-HPr). This is HPr kinase/phosphorylase from Bordetella petrii (strain ATCC BAA-461 / DSM 12804 / CCUG 43448).